The following is a 458-amino-acid chain: Divalent metal cation transporter MntH (458 aa).

Transmembrane regions (helical) follow at residues Gly38–Met58, Ser76–Ala96, Gly119–Ile139, Met151–Met171, Ala180–Ala200, Met223–Gly243, Leu275–Gly295, Ile315–Ser335, Leu370–Ile390, Leu393–Val413, and Phe437–Val457.

Belongs to the NRAMP family.

The protein localises to the cell membrane. Functionally, h(+)-stimulated, divalent metal cation uptake system. In Lacticaseibacillus casei (strain BL23) (Lactobacillus casei), this protein is Divalent metal cation transporter MntH.